The primary structure comprises 461 residues: Phosphomethylpyrimidine synthase (461 aa).

Substrate is bound by residues asparagine 80, methionine 109, tyrosine 139, histidine 175, 195–197 (SRG), 236–239 (DSLR), and glutamate 275. Histidine 279 is a Zn(2+) binding site. Position 302 (tyrosine 302) interacts with substrate. Residue histidine 343 coordinates Zn(2+). Positions 423, 426, and 431 each coordinate [4Fe-4S] cluster.

This sequence belongs to the ThiC family. It depends on [4Fe-4S] cluster as a cofactor.

It catalyses the reaction 5-amino-1-(5-phospho-beta-D-ribosyl)imidazole + S-adenosyl-L-methionine = 4-amino-2-methyl-5-(phosphooxymethyl)pyrimidine + CO + 5'-deoxyadenosine + formate + L-methionine + 3 H(+). The protein operates within cofactor biosynthesis; thiamine diphosphate biosynthesis. Functionally, catalyzes the synthesis of the hydroxymethylpyrimidine phosphate (HMP-P) moiety of thiamine from aminoimidazole ribotide (AIR) in a radical S-adenosyl-L-methionine (SAM)-dependent reaction. In Picosynechococcus sp. (strain ATCC 27264 / PCC 7002 / PR-6) (Agmenellum quadruplicatum), this protein is Phosphomethylpyrimidine synthase.